Reading from the N-terminus, the 174-residue chain is Translationally-controlled tumor protein homolog 1 (174 aa).

The TCTP domain maps to 1 to 174 (MRVFKDIVGY…FKDGLESVKY (174 aa)).

The protein belongs to the TCTP family.

It is found in the cytoplasm. In terms of biological role, involved in calcium binding and microtubule stabilization. The protein is Translationally-controlled tumor protein homolog 1 of Dictyostelium discoideum (Social amoeba).